Reading from the N-terminus, the 269-residue chain is Cytochrome c oxidase subunit 3 (269 aa).

Helical transmembrane passes span 21–41 (PWPI…ALTM), 45–65 (IGHM…ATLW), 90–110 (GFLL…WAYF), 138–160 (PLLN…HGLV), 167–187 (ALSG…CQYI), 205–225 (FYAG…MLGI), and 247–267 (VLYC…FYWW).

This sequence belongs to the cytochrome c oxidase subunit 3 family. As to quaternary structure, component of the cytochrome c oxidase (complex IV, CIV), a multisubunit enzyme composed of a catalytic core of 3 subunits and several supernumerary subunits. The complex exists as a monomer or a dimer and forms supercomplexes (SCs) in the inner mitochondrial membrane with ubiquinol-cytochrome c oxidoreductase (cytochrome b-c1 complex, complex III, CIII).

It is found in the mitochondrion inner membrane. The enzyme catalyses 4 Fe(II)-[cytochrome c] + O2 + 8 H(+)(in) = 4 Fe(III)-[cytochrome c] + 2 H2O + 4 H(+)(out). Its function is as follows. Component of the cytochrome c oxidase, the last enzyme in the mitochondrial electron transport chain which drives oxidative phosphorylation. The respiratory chain contains 3 multisubunit complexes succinate dehydrogenase (complex II, CII), ubiquinol-cytochrome c oxidoreductase (cytochrome b-c1 complex, complex III, CIII) and cytochrome c oxidase (complex IV, CIV), that cooperate to transfer electrons derived from NADH and succinate to molecular oxygen, creating an electrochemical gradient over the inner membrane that drives transmembrane transport and the ATP synthase. Cytochrome c oxidase is the component of the respiratory chain that catalyzes the reduction of oxygen to water. Electrons originating from reduced cytochrome c in the intermembrane space (IMS) are transferred via the dinuclear copper A center (CU(A)) of subunit 2 and heme A of subunit 1 to the active site in subunit 1, a binuclear center (BNC) formed by heme A3 and copper B (CU(B)). The BNC reduces molecular oxygen to 2 water molecules using 4 electrons from cytochrome c in the IMS and 4 protons from the mitochondrial matrix. The protein is Cytochrome c oxidase subunit 3 (COX3) of Kluyveromyces lactis (strain ATCC 8585 / CBS 2359 / DSM 70799 / NBRC 1267 / NRRL Y-1140 / WM37) (Yeast).